A 306-amino-acid polypeptide reads, in one-letter code: Porphobilinogen deaminase (306 aa).

At Cys240 the chain carries S-(dipyrrolylmethanemethyl)cysteine.

Belongs to the HMBS family. In terms of assembly, monomer. Dipyrromethane is required as a cofactor.

The catalysed reaction is 4 porphobilinogen + H2O = hydroxymethylbilane + 4 NH4(+). It functions in the pathway porphyrin-containing compound metabolism; protoporphyrin-IX biosynthesis; coproporphyrinogen-III from 5-aminolevulinate: step 2/4. In terms of biological role, tetrapolymerization of the monopyrrole PBG into the hydroxymethylbilane pre-uroporphyrinogen in several discrete steps. The polypeptide is Porphobilinogen deaminase (Thiobacillus denitrificans (strain ATCC 25259 / T1)).